A 544-amino-acid chain; its full sequence is CTP synthase (544 aa).

The segment at 1 to 265 is amidoligase domain; it reads MTKFIFVTGG…DNIITEQLQL (265 aa). A CTP-binding site is contributed by Ser13. Ser13 lines the UTP pocket. Residues 14–19 and Asp71 contribute to the ATP site; that span reads SLGKGI. Mg(2+) is bound by residues Asp71 and Glu139. CTP-binding positions include 146-148, 186-191, and Lys222; these read DIE and KTKPTQ. Residues 186-191 and Lys222 each bind UTP; that span reads KTKPTQ. A Glutamine amidotransferase type-1 domain is found at 290-544; the sequence is KIAMVGKYVD…VKAALNNKKA (255 aa). Gly353 lines the L-glutamine pocket. Cys380 acts as the Nucleophile; for glutamine hydrolysis in catalysis. Residues 381-384, Glu404, and Arg471 contribute to the L-glutamine site; that span reads LGMQ. Residues His517 and Glu519 contribute to the active site.

This sequence belongs to the CTP synthase family. In terms of assembly, homotetramer.

It catalyses the reaction UTP + L-glutamine + ATP + H2O = CTP + L-glutamate + ADP + phosphate + 2 H(+). The enzyme catalyses L-glutamine + H2O = L-glutamate + NH4(+). The catalysed reaction is UTP + NH4(+) + ATP = CTP + ADP + phosphate + 2 H(+). Its pathway is pyrimidine metabolism; CTP biosynthesis via de novo pathway; CTP from UDP: step 2/2. With respect to regulation, allosterically activated by GTP, when glutamine is the substrate; GTP has no effect on the reaction when ammonia is the substrate. The allosteric effector GTP functions by stabilizing the protein conformation that binds the tetrahedral intermediate(s) formed during glutamine hydrolysis. Inhibited by the product CTP, via allosteric rather than competitive inhibition. Functionally, catalyzes the ATP-dependent amination of UTP to CTP with either L-glutamine or ammonia as the source of nitrogen. Regulates intracellular CTP levels through interactions with the four ribonucleotide triphosphates. In Neisseria meningitidis serogroup C (strain 053442), this protein is CTP synthase.